Consider the following 106-residue polypeptide: SH3 domain-binding glutamic acid-rich-like protein 2-B (106 aa).

Residues 61 to 67 carry the SH3-binding motif; that stretch reads QGNPLPP.

It belongs to the SH3BGR family.

The protein localises to the nucleus. This Xenopus laevis (African clawed frog) protein is SH3 domain-binding glutamic acid-rich-like protein 2-B (sh3bgrl2-b).